The following is a 364-amino-acid chain: MSSIMYHDNHLTDSGKNMSSGLSLLAYVTVMVAEEEEQRSRLLAEKREESKCKMSFFYLFPRKIKSSLAKRRYTQQNPNGASTCSSSLPDLNLIPTDFETDNLQNPCFDEPMVCDEEQRLKKGKSKIVYDEDYDDESEKKLFDNLNGASTSSSSLLNLPCLEPSTETKDVPNPNYQSSSPSSCLTGKTNRKRRAVEQRKSGKVKKVKVSPLPRLCTEMPEWIFQVMRYMNADAETPRLIFERTLFKSDVNSNLSRLLMPFQKLIRNDFLTPAECRAMQKDEDNDEEDDENIGVGTVLVNQRFQKWGLRFKIWAMEKDSGHGTLNYTLNWGWNDVVKSSSLKVGDKISLWTFRCRGVLCFALDTE.

Residues 148-202 (ASTSSSSLLNLPCLEPSTETKDVPNPNYQSSSPSSCLTGKTNRKRRAVEQRKSGK) form a disordered region. Positions 260–364 (FQKLIRNDFL…GVLCFALDTE (105 aa)) form a DNA-binding region, TF-B3.

The protein localises to the nucleus. The sequence is that of B3 domain-containing protein At5g38490 from Arabidopsis thaliana (Mouse-ear cress).